The chain runs to 407 residues: Imidazolonepropionase (407 aa).

Residues His-74 and His-76 each contribute to the Fe(3+) site. Residues His-74 and His-76 each coordinate Zn(2+). Arg-83, Tyr-146, and His-179 together coordinate 4-imidazolone-5-propanoate. Tyr-146 is a binding site for N-formimidoyl-L-glutamate. His-244 is a binding site for Fe(3+). Position 244 (His-244) interacts with Zn(2+). Gln-247 serves as a coordination point for 4-imidazolone-5-propanoate. A Fe(3+)-binding site is contributed by Asp-319. Asp-319 lines the Zn(2+) pocket. Residues Asn-321 and Gly-323 each coordinate N-formimidoyl-L-glutamate. Residue Thr-324 coordinates 4-imidazolone-5-propanoate.

This sequence belongs to the metallo-dependent hydrolases superfamily. HutI family. Requires Zn(2+) as cofactor. The cofactor is Fe(3+).

Its subcellular location is the cytoplasm. The enzyme catalyses 4-imidazolone-5-propanoate + H2O = N-formimidoyl-L-glutamate. Its pathway is amino-acid degradation; L-histidine degradation into L-glutamate; N-formimidoyl-L-glutamate from L-histidine: step 3/3. Catalyzes the hydrolytic cleavage of the carbon-nitrogen bond in imidazolone-5-propanoate to yield N-formimidoyl-L-glutamate. It is the third step in the universal histidine degradation pathway. This chain is Imidazolonepropionase, found in Salmonella heidelberg (strain SL476).